The following is a 410-amino-acid chain: Regulator of microtubule dynamics protein 2 (410 aa).

A helical membrane pass occupies residues 9-28 (LILGIMAGTAGISLLAFWYH). The residue at position 51 (Ser-51) is a Phosphoserine. Positions 69 to 110 (QRRQLQILEKLNELLTNMEELKEEIRFLKETIPKLEECIQDE) form a coiled coil. The interval 120-151 (ISPQHRARKKKGTTVQRSATSNSSEEAESEGG) is disordered. Ser-121 carries the post-translational modification Phosphoserine. Positions 121 to 131 (SPQHRARKKKG) are enriched in basic residues. Thr-139 is modified (phosphothreonine). Tyr-152 is subject to Phosphotyrosine. Phosphothreonine is present on residues Thr-154 and Thr-157.

This sequence belongs to the RMDN family. As to quaternary structure, interacts with microtubules.

It is found in the membrane. It localises to the cytoplasm. Its subcellular location is the cytoskeleton. The protein localises to the spindle. The protein resides in the spindle pole. In Mus musculus (Mouse), this protein is Regulator of microtubule dynamics protein 2 (Rmdn2).